Consider the following 92-residue polypeptide: MQKTSIVAFRRGYRLQWEAAQESHVILYPEGMAKLNETAAAILELVDGRRDVAAIIAMLNERFPEAGGVDDDVVEFLQIACQQKWITCREPE.

The protein belongs to the PqqD family. In terms of assembly, monomer. Interacts with PqqE.

Its pathway is cofactor biosynthesis; pyrroloquinoline quinone biosynthesis. Functions as a PqqA binding protein and presents PqqA to PqqE, in the pyrroloquinoline quinone (PQQ) biosynthetic pathway. This is PqqA binding protein from Klebsiella pneumoniae (strain 342).